The chain runs to 196 residues: Golgi to ER traffic protein 1 (196 aa).

The Lumenal portion of the chain corresponds to 1 to 10 (MFLDLHPYTI). A helical membrane pass occupies residues 11-30 (LVSIFIILLVKQIVGRIGKS). At 31-114 (TIQEFVWLLY…SIDKLANVLL (84 aa)) the chain is on the cytoplasmic side. The stretch at 76 to 114 (AKWTKLNRQADKLTSEIQKLNEEIRQSKASIDKLANVLL) forms a coiled coil. The chain crosses the membrane as a helical span at residues 115–135 (MVLTTLPIWVARIFFRKTHLF). Over 136 to 159 (YLRSGIFPRYIEWVLALPFFPSGA) the chain is Lumenal. A helical membrane pass occupies residues 160–176 (VGLTVWMFAANSVIHNV). The Cytoplasmic segment spans residues 177–196 (ISLVSFAFEKRVEKPVRQKK).

The protein belongs to the WRB/GET1 family. Component of the Golgi to ER traffic (GET) complex, which is composed of GET1, GET2 and GET3. Within the complex, GET1 and GET2 form a heterotetramer which is stabilized by phosphatidylinositol binding and which binds to the GET3 homodimer.

It localises to the endoplasmic reticulum membrane. The protein localises to the golgi apparatus membrane. Functionally, required for the post-translational delivery of tail-anchored (TA) proteins to the endoplasmic reticulum. Together with GET2, acts as a membrane receptor for soluble GET3, which recognizes and selectively binds the transmembrane domain of TA proteins in the cytosol. The GET complex cooperates with the HDEL receptor ERD2 to mediate the ATP-dependent retrieval of resident ER proteins that contain a C-terminal H-D-E-L retention signal from the Golgi to the ER. The chain is Golgi to ER traffic protein 1 from Candida tropicalis (strain ATCC MYA-3404 / T1) (Yeast).